The sequence spans 252 residues: Imidazole glycerol phosphate synthase subunit HisF (252 aa).

Residues Asp-11 and Asp-130 contribute to the active site.

Belongs to the HisA/HisF family. In terms of assembly, heterodimer of HisH and HisF.

The protein resides in the cytoplasm. It catalyses the reaction 5-[(5-phospho-1-deoxy-D-ribulos-1-ylimino)methylamino]-1-(5-phospho-beta-D-ribosyl)imidazole-4-carboxamide + L-glutamine = D-erythro-1-(imidazol-4-yl)glycerol 3-phosphate + 5-amino-1-(5-phospho-beta-D-ribosyl)imidazole-4-carboxamide + L-glutamate + H(+). It functions in the pathway amino-acid biosynthesis; L-histidine biosynthesis; L-histidine from 5-phospho-alpha-D-ribose 1-diphosphate: step 5/9. Functionally, IGPS catalyzes the conversion of PRFAR and glutamine to IGP, AICAR and glutamate. The HisF subunit catalyzes the cyclization activity that produces IGP and AICAR from PRFAR using the ammonia provided by the HisH subunit. This chain is Imidazole glycerol phosphate synthase subunit HisF, found in Staphylococcus epidermidis (strain ATCC 12228 / FDA PCI 1200).